The primary structure comprises 266 residues: Very-long-chain aldehyde decarbonylase GL1-11 (266 aa).

A run of 4 helical transmembrane segments spans residues valine 25–phenylalanine 45, isoleucine 74–phenylalanine 94, tryptophan 106–tryptophan 126, and isoleucine 163–threonine 183. One can recognise a Fatty acid hydroxylase domain in the interval valine 113–threonine 248.

Belongs to the sterol desaturase family. As to quaternary structure, homodimer.

Its subcellular location is the endoplasmic reticulum membrane. The catalysed reaction is a long-chain fatty aldehyde + 2 NADPH + O2 + H(+) = a long-chain alkane + formate + 2 NADP(+) + H2O. Its function is as follows. Aldehyde decarbonylase involved in the conversion of aldehydes to alkanes. Core component of a very-long-chain alkane synthesis complex. This Oryza sativa subsp. indica (Rice) protein is Very-long-chain aldehyde decarbonylase GL1-11.